A 267-amino-acid polypeptide reads, in one-letter code: MTQIHSTALVDPKAELADDVTVGPFSIVGPNVRIGSGTRIGSHTTVEGHTTIGAGNRIGPYASVGGVPQDMKYANEPTQLVIGDRNTIREFTTIHTGTVQDRGVTSLGNDNWIMAYVHIAHDCSVGNHTVFSSNAQIAGHVEVGDWAILGGMSGVHQYVRIGAHAMLGGASALVQDVPPFVIAASDKNGNKATPHGINVEGLRRRGFDAGQIAALRQAYKLLYKSDLSFDDARAEITAMLGQVDATTAVPLQAFVEFLAATQRGIVR.

It belongs to the transferase hexapeptide repeat family. LpxA subfamily. In terms of assembly, homotrimer.

It localises to the cytoplasm. The enzyme catalyses a (3R)-hydroxyacyl-[ACP] + UDP-N-acetyl-alpha-D-glucosamine = a UDP-3-O-[(3R)-3-hydroxyacyl]-N-acetyl-alpha-D-glucosamine + holo-[ACP]. It participates in glycolipid biosynthesis; lipid IV(A) biosynthesis; lipid IV(A) from (3R)-3-hydroxytetradecanoyl-[acyl-carrier-protein] and UDP-N-acetyl-alpha-D-glucosamine: step 1/6. Involved in the biosynthesis of lipid A, a phosphorylated glycolipid that anchors the lipopolysaccharide to the outer membrane of the cell. In Cupriavidus metallidurans (strain ATCC 43123 / DSM 2839 / NBRC 102507 / CH34) (Ralstonia metallidurans), this protein is Acyl-[acyl-carrier-protein]--UDP-N-acetylglucosamine O-acyltransferase.